An 894-amino-acid polypeptide reads, in one-letter code: DNA mismatch repair protein MutS (894 aa).

607–614 (GPNMSGKS) lines the ATP pocket.

This sequence belongs to the DNA mismatch repair MutS family.

In terms of biological role, this protein is involved in the repair of mismatches in DNA. It is possible that it carries out the mismatch recognition step. This protein has a weak ATPase activity. The protein is DNA mismatch repair protein MutS of Bacillus cereus (strain ZK / E33L).